Here is a 254-residue protein sequence, read N- to C-terminus: TLC domain-containing protein At5g14285 (254 aa).

The next 6 helical transmembrane spans lie at 12–32 (DLPIFFSMFLTIYLIAYFIVF), 45–65 (SCLISIFHGSPAVFLATRAVF), 82–101 (TVLDFSVAYFLTDLFHYIVF), 124–144 (FLVFHGACAILGLLILAEVTS), 172–192 (LSPPFYAFYSIVRGVLGPLFF), and 211–231 (WLWISWAIVVGIAITVSILWI). Residues 38–248 (QIRPEASSCL…FSERKANKIR (211 aa)) enclose the TLC domain.

Its subcellular location is the membrane. This Arabidopsis thaliana (Mouse-ear cress) protein is TLC domain-containing protein At5g14285.